A 346-amino-acid chain; its full sequence is Protein NDL1 (346 aa).

This sequence belongs to the NDRG family. Interacts with GB1. Interacts with the heterodimers formed by GB1 and GG1, or GB1 and GG2. Interacts with RGS1. As to expression, expressed in root vasculature, cotyledons, leaves, petals, mature stamens and pollen grains.

It is found in the cytoplasm. Its function is as follows. Interacts with the heterotrimeric G protein beta subunit GB1 and plays an significant role in GB1-dependent regulation of lateral root formation. Involved in a signaling pathway that modulates root auxin transport and auxin gradients. Acts partially by positively regulating the auxin carrier PIN2 and AUX1. Acts, together with GB1 as positive regulator of meristem initiation and branching. GB1 and NDL1 positively regulate basipetal inflorescence auxin transport and modulate MAX2 expression in shoots, which regulates organ and lateral meristem formation by the establishment and maintenance of auxin gradients. The sequence is that of Protein NDL1 from Arabidopsis thaliana (Mouse-ear cress).